Here is a 174-residue protein sequence, read N- to C-terminus: Cytochrome c-type biogenesis protein CcmE (174 aa).

Residues 1 to 7 are Cytoplasmic-facing; it reads MTRKSRR. Residues 8-28 form a helical; Signal-anchor for type II membrane protein membrane-spanning segment; the sequence is LILIGAGLGVLALAAGLILTA. Topologically, residues 29–174 are periplasmic; it reads LNDTIVFFRT…PAVSPARSTP (146 aa). Heme is bound by residues histidine 121 and tyrosine 125. Positions 130–144 are enriched in basic and acidic residues; that stretch reads VADALKKSGHWKEGE. Positions 130 to 174 are disordered; sequence VADALKKSGHWKEGEEGGPVPPAAKTPGPQSSAAPPAVSPARSTP. Positions 156 to 174 are enriched in low complexity; the sequence is PGPQSSAAPPAVSPARSTP.

It belongs to the CcmE/CycJ family.

It is found in the cell inner membrane. Its function is as follows. Heme chaperone required for the biogenesis of c-type cytochromes. Transiently binds heme delivered by CcmC and transfers the heme to apo-cytochromes in a process facilitated by CcmF and CcmH. This chain is Cytochrome c-type biogenesis protein CcmE, found in Azorhizobium caulinodans (strain ATCC 43989 / DSM 5975 / JCM 20966 / LMG 6465 / NBRC 14845 / NCIMB 13405 / ORS 571).